Here is a 297-residue protein sequence, read N- to C-terminus: Phosphatidylserine decarboxylase proenzyme (297 aa).

Catalysis depends on charge relay system; for autoendoproteolytic cleavage activity residues D100, H157, and S263. The active-site Schiff-base intermediate with substrate; via pyruvic acid; for decarboxylase activity is the S263. Pyruvic acid (Ser); by autocatalysis is present on S263.

It belongs to the phosphatidylserine decarboxylase family. PSD-B subfamily. Prokaryotic type I sub-subfamily. As to quaternary structure, heterodimer of a large membrane-associated beta subunit and a small pyruvoyl-containing alpha subunit. Pyruvate serves as cofactor. Is synthesized initially as an inactive proenzyme. Formation of the active enzyme involves a self-maturation process in which the active site pyruvoyl group is generated from an internal serine residue via an autocatalytic post-translational modification. Two non-identical subunits are generated from the proenzyme in this reaction, and the pyruvate is formed at the N-terminus of the alpha chain, which is derived from the carboxyl end of the proenzyme. The autoendoproteolytic cleavage occurs by a canonical serine protease mechanism, in which the side chain hydroxyl group of the serine supplies its oxygen atom to form the C-terminus of the beta chain, while the remainder of the serine residue undergoes an oxidative deamination to produce ammonia and the pyruvoyl prosthetic group on the alpha chain. During this reaction, the Ser that is part of the protease active site of the proenzyme becomes the pyruvoyl prosthetic group, which constitutes an essential element of the active site of the mature decarboxylase.

The protein resides in the cell membrane. It catalyses the reaction a 1,2-diacyl-sn-glycero-3-phospho-L-serine + H(+) = a 1,2-diacyl-sn-glycero-3-phosphoethanolamine + CO2. It participates in phospholipid metabolism; phosphatidylethanolamine biosynthesis; phosphatidylethanolamine from CDP-diacylglycerol: step 2/2. In terms of biological role, catalyzes the formation of phosphatidylethanolamine (PtdEtn) from phosphatidylserine (PtdSer). This chain is Phosphatidylserine decarboxylase proenzyme, found in Haemophilus ducreyi (strain 35000HP / ATCC 700724).